Consider the following 386-residue polypeptide: tRNA-specific adenosine deaminase subunit tad2 (386 aa).

One can recognise a CMP/dCMP-type deaminase domain in the interval 212-322 (TQHETYMKLA…GNDRFGGCGS (111 aa)). Residue His263 participates in Zn(2+) binding. Glu265 functions as the Proton donor in the catalytic mechanism. Residues Cys293 and Cys296 each coordinate Zn(2+).

It belongs to the cytidine and deoxycytidylate deaminase family. ADAT2 subfamily. As to quaternary structure, heterodimer with Tad3. The cofactor is Zn(2+).

It catalyses the reaction adenosine(34) in tRNA + H2O + H(+) = inosine(34) in tRNA + NH4(+). Structural subunit of tRNA-specific adenosine deaminase, which deaminates adenosine-34 (the first, also called wobble position of the anticodon) to inosine in many tRNAs. Inosine-34 allows the decoding of 3 different nucleotides at the third position of mRNA codons, as inosine is able to pair with U, C, and A. The wobble inosine tRNA modification is essential for cell cycle progression in the G1/S and G2/M transitions in fission yeast. This is tRNA-specific adenosine deaminase subunit tad2 (tad2) from Schizosaccharomyces pombe (strain 972 / ATCC 24843) (Fission yeast).